We begin with the raw amino-acid sequence, 1179 residues long: DNA-directed RNA polymerase subunit beta' (1179 aa).

Zn(2+) contacts are provided by cysteine 60, cysteine 62, cysteine 75, and cysteine 78. Mg(2+) is bound by residues aspartate 450, aspartate 452, and aspartate 454. 4 residues coordinate Zn(2+): cysteine 791, cysteine 865, cysteine 872, and cysteine 875.

It belongs to the RNA polymerase beta' chain family. As to quaternary structure, the RNAP catalytic core consists of 2 alpha, 1 beta, 1 beta' and 1 omega subunit. When a sigma factor is associated with the core the holoenzyme is formed, which can initiate transcription. Mg(2+) serves as cofactor. Zn(2+) is required as a cofactor.

It carries out the reaction RNA(n) + a ribonucleoside 5'-triphosphate = RNA(n+1) + diphosphate. In terms of biological role, DNA-dependent RNA polymerase catalyzes the transcription of DNA into RNA using the four ribonucleoside triphosphates as substrates. The polypeptide is DNA-directed RNA polymerase subunit beta' (Alkaliphilus oremlandii (strain OhILAs) (Clostridium oremlandii (strain OhILAs))).